The primary structure comprises 328 residues: MANSDSPEQNENHCSSINSSIPLTPGSLPTLTLSGKIRVTVTFFLFLLSTIFNTSFLLKLQNWTQRKEKRKKLSRMKLLLKHLTLANLLETLIVMPLDGMWNITVQWYAGELLCKVLSYLKLFSMYAPAFMMVVISLDRSLAITKPLAVKSNSKLGQFMIGLAWLLSSIFAGPQLYIFGMIHLADDSGQTEGFSQCVTHCSFPQWWHQAFYNFFTFSCLFIIPLLIMVICNAKIIFTLTRVLHQDPHKLQLNQSKNNIPRARLRTLKMTVAFATSFTVCWTPYYVLGIWYWFDPDMVNRVSDPVNHFFFLFAFLNPCFNPLIYGYFSL.

Residues 1–38 lie on the Extracellular side of the membrane; it reads MANSDSPEQNENHCSSINSSIPLTPGSLPTLTLSGKIR. A glycan (N-linked (GlcNAc...) asparagine) is linked at N18. A helical transmembrane segment spans residues 39–58; the sequence is VTVTFFLFLLSTIFNTSFLL. Residues 59 to 77 lie on the Cytoplasmic side of the membrane; sequence KLQNWTQRKEKRKKLSRMK. Residues 78-97 traverse the membrane as a helical segment; that stretch reads LLLKHLTLANLLETLIVMPL. Over 98–115 the chain is Extracellular; that stretch reads DGMWNITVQWYAGELLCK. N-linked (GlcNAc...) asparagine glycosylation is present at N102. C114 and C196 are joined by a disulfide. Residues 116–137 traverse the membrane as a helical segment; sequence VLSYLKLFSMYAPAFMMVVISL. Topologically, residues 138-164 are cytoplasmic; the sequence is DRSLAITKPLAVKSNSKLGQFMIGLAW. The chain crosses the membrane as a helical span at residues 165–184; sequence LLSSIFAGPQLYIFGMIHLA. Residues 185 to 212 lie on the Extracellular side of the membrane; sequence DDSGQTEGFSQCVTHCSFPQWWHQAFYN. Residues 213-232 form a helical membrane-spanning segment; the sequence is FFTFSCLFIIPLLIMVICNA. At 233 to 281 the chain is on the cytoplasmic side; it reads KIIFTLTRVLHQDPHKLQLNQSKNNIPRARLRTLKMTVAFATSFTVCWT. A helical membrane pass occupies residues 282–300; it reads PYYVLGIWYWFDPDMVNRV. Residues 301-306 lie on the Extracellular side of the membrane; the sequence is SDPVNH. A helical membrane pass occupies residues 307-326; it reads FFFLFAFLNPCFNPLIYGYF. Over 327–328 the chain is Cytoplasmic; that stretch reads SL.

Belongs to the G-protein coupled receptor 1 family.

The protein localises to the cell membrane. In terms of biological role, receptor for gonadotropin releasing hormone (GnRH) that mediates the action of GnRH to stimulate the secretion of the gonadotropic hormones luteinizing hormone (LH) and follicle-stimulating hormone (FSH). This receptor mediates its action by association with G-proteins that activate a phosphatidylinositol-calcium second messenger system. The polypeptide is Gonadotropin-releasing hormone receptor (GNRHR) (Bos mutus grunniens (Wild yak)).